Consider the following 361-residue polypeptide: S-adenosylmethionine:tRNA ribosyltransferase-isomerase (361 aa).

Belongs to the QueA family. Monomer.

The protein resides in the cytoplasm. The catalysed reaction is 7-aminomethyl-7-carbaguanosine(34) in tRNA + S-adenosyl-L-methionine = epoxyqueuosine(34) in tRNA + adenine + L-methionine + 2 H(+). Its pathway is tRNA modification; tRNA-queuosine biosynthesis. In terms of biological role, transfers and isomerizes the ribose moiety from AdoMet to the 7-aminomethyl group of 7-deazaguanine (preQ1-tRNA) to give epoxyqueuosine (oQ-tRNA). The chain is S-adenosylmethionine:tRNA ribosyltransferase-isomerase from Rhizobium etli (strain ATCC 51251 / DSM 11541 / JCM 21823 / NBRC 15573 / CFN 42).